The following is a 1051-amino-acid chain: Ubiquitin carboxyl-terminal hydrolase 28 (1051 aa).

Positions 60 to 82 (DQRVKEPSHDTTAAEPSEVEESA) are disordered. The residue at position 67 (S67) is a Phosphoserine. The 20-residue stretch at 97–116 (DNKDDLQAAIALSLLESPNI) folds into the UIM domain. Residue K99 forms a Glycyl lysine isopeptide (Lys-Gly) (interchain with G-Cter in SUMO2) linkage. Residues 121 to 135 (RDLNRAHEANSAETK) show a composition bias toward basic and acidic residues. Positions 121–140 (RDLNRAHEANSAETKRSKRK) are disordered. The USP domain occupies 162–655 (VGLKNVGNTC…SAYCLMYIND (494 aa)). Residue C171 is the Nucleophile of the active site. S376 is subject to Phosphoserine. The disordered stretch occupies residues 483 to 538 (DLTPKESSSPESCSQNAGSTFSSPEDALPSSEGMNGPFTSPHSSLETPAPPAPRTV). 2 stretches are compositionally biased toward polar residues: residues 487 to 505 (KESS…TFSS) and 519 to 528 (PFTSPHSSLE). At S555 the chain carries Phosphoserine. The Proton acceptor role is filled by H605. A disordered region spans residues 703–735 (EEQSCKIPQMESSPNSSSQDFSTSQESPAVSSH). Residues 713-730 (ESSPNSSSQDFSTSQESP) show a composition bias toward low complexity. At S720 the chain carries Phosphoserine. T1022 carries the post-translational modification Phosphothreonine.

It belongs to the peptidase C19 family. USP28 subfamily. In terms of assembly, interacts with ZNF304. Interacts with PRKD1. Interacts with TP53BP1. Interacts with FBXW7; following DNA damage, dissociates from FBXW7 leading to degradation of MYC. In terms of processing, degraded upon nickel ion level or hypoxia exposure. Post-translationally, phosphorylated upon DNA damage at Ser-67 and Ser-720, by ATM or ATR. Phosphorylated by PRKD1.

The protein localises to the nucleus. It is found in the nucleoplasm. The catalysed reaction is Thiol-dependent hydrolysis of ester, thioester, amide, peptide and isopeptide bonds formed by the C-terminal Gly of ubiquitin (a 76-residue protein attached to proteins as an intracellular targeting signal).. Functionally, deubiquitinase involved in DNA damage response checkpoint and MYC proto-oncogene stability. Involved in DNA damage induced apoptosis by specifically deubiquitinating proteins of the DNA damage pathway such as CLSPN. Also involved in G2 DNA damage checkpoint, by deubiquitinating CLSPN, and preventing its degradation by the anaphase promoting complex/cyclosome (APC/C). In contrast, it does not deubiquitinate PLK1. Specifically deubiquitinates MYC in the nucleoplasm, leading to prevent MYC degradation by the proteasome: acts by specifically interacting with FBXW7 (FBW7alpha) in the nucleoplasm and counteracting ubiquitination of MYC by the SCF(FBXW7) complex. Deubiquitinates ZNF304, hence preventing ZNF304 degradation by the proteasome and leading to the activated KRAS-mediated promoter hypermethylation and transcriptional silencing of tumor suppressor genes (TSGs) in a subset of colorectal cancers (CRC) cells. In Mus musculus (Mouse), this protein is Ubiquitin carboxyl-terminal hydrolase 28 (Usp28).